A 444-amino-acid polypeptide reads, in one-letter code: Tubulin beta-4 chain (444 aa).

Positions 11, 69, 138, 142, 143, 144, 204, and 226 each coordinate GTP. Glu69 contributes to the Mg(2+) binding site.

This sequence belongs to the tubulin family. In terms of assembly, dimer of alpha and beta chains. A typical microtubule is a hollow water-filled tube with an outer diameter of 25 nm and an inner diameter of 15 nM. Alpha-beta heterodimers associate head-to-tail to form protofilaments running lengthwise along the microtubule wall with the beta-tubulin subunit facing the microtubule plus end conferring a structural polarity. Microtubules usually have 13 protofilaments but different protofilament numbers can be found in some organisms and specialized cells. Mg(2+) is required as a cofactor.

It localises to the cytoplasm. The protein localises to the cytoskeleton. Functionally, tubulin is the major constituent of microtubules, a cylinder consisting of laterally associated linear protofilaments composed of alpha- and beta-tubulin heterodimers. Microtubules grow by the addition of GTP-tubulin dimers to the microtubule end, where a stabilizing cap forms. Below the cap, tubulin dimers are in GDP-bound state, owing to GTPase activity of alpha-tubulin. This chain is Tubulin beta-4 chain (TUBB4), found in Arabidopsis thaliana (Mouse-ear cress).